Consider the following 496-residue polypeptide: Probable glycine betaine transporter (496 aa).

A run of 12 helical transmembrane segments spans residues 11–31 (TVLY…VFLP), 49–69 (FGWL…GIAI), 89–109 (FQWF…FWSV), 136–156 (VVFF…GLAL), 188–208 (AIDI…LGLG), 219–239 (IWGI…ITVI), 260–280 (VWLS…VFIL), 306–326 (WVGG…PFVG), 341–361 (FVFA…AIYG), 396–416 (LYAI…VGAA), 441–461 (FWGI…GTAA), and 468–488 (ASIA…YSIL).

Belongs to the BCCT transporter (TC 2.A.15) family.

It is found in the cell membrane. Functionally, probably acts in the uptake of glycine betaine. May function in the pathway that allows anaerobic methylotrophic growth of D.hafniense using glycine betaine. The protein is Probable glycine betaine transporter of Desulfitobacterium hafniense (strain Y51).